We begin with the raw amino-acid sequence, 29 residues long: Ranatuerin-2SEa (29 aa).

Cys23 and Cys29 form a disulfide bridge.

In terms of tissue distribution, expressed by the skin glands.

The protein resides in the secreted. Mast cell degranulating peptide. Causes histamine release from rat peritoneal mast cells in vitro. Has antibacterial activity against the Gram-negative bacterium E.coli K12 and Gram-positive bacterium M.luteus NCT C2665. The sequence is that of Ranatuerin-2SEa from Lithobates sevosus (Dusky gopher frog).